The primary structure comprises 70 residues: Potassium channel toxin kappa-KTx 2.5 (70 aa).

An N-terminal signal peptide occupies residues 1-26 (MESSRKSYVLMLFLAFVIMNVCSVSG). Positions 27-42 (EPKDGEIAGFEMEEAR) are excised as a propeptide. Cystine bridges form between C46/C64 and C50/C60.

It belongs to the short scorpion toxin superfamily. Potassium channel inhibitor kappa-KTx family. Kappa-KTx 2 subfamily. In terms of tissue distribution, expressed by the venom gland.

The protein localises to the secreted. Its function is as follows. Voltage-independently blocks potassium currents on hKv1.1/KCNA1 (IC(50)=217 uM), and hKv1.4/KCNA4 (IC(50)=71 uM) (expressed in CHO cells). The chain is Potassium channel toxin kappa-KTx 2.5 from Opisthacanthus cayaporum (South American scorpion).